A 345-amino-acid polypeptide reads, in one-letter code: MLPTVNNNIVIALDAMGGDFAPLSVIQGAGFFLDNLVDPGIKVFFHIYGDQKEISPLLLKYRKVSDNSEFTHYSNNVLANDKPSFALRHRKDSSMKAAIEAVKKGKASGMVSSGNTGALMAISRFILGTLPNVYRPAIVSVCPTKAKSFALLDLGANVDCNVDSLFQFALMGSMFAKIALKVDNPEVALLNIGTEEVKGNDSVRGAFKLLKSAPNINFKGYIEASEFLEGNIDVIVADGFVGNVMLKTAEATASTFIDLIKQEMFNSWATKMLVGILLKSKLNKVLMRFNPKIRSGAMFLGLNGIVIKSHGNSDAVSFAHAIKFAVNSINENLNQKIISEVNQVE.

This sequence belongs to the PlsX family. In terms of assembly, homodimer. Probably interacts with PlsY.

The protein resides in the cytoplasm. The enzyme catalyses a fatty acyl-[ACP] + phosphate = an acyl phosphate + holo-[ACP]. It functions in the pathway lipid metabolism; phospholipid metabolism. Functionally, catalyzes the reversible formation of acyl-phosphate (acyl-PO(4)) from acyl-[acyl-carrier-protein] (acyl-ACP). This enzyme utilizes acyl-ACP as fatty acyl donor, but not acyl-CoA. The protein is Phosphate acyltransferase of Wolbachia sp. subsp. Brugia malayi (strain TRS).